We begin with the raw amino-acid sequence, 392 residues long: ABSCISIC ACID-INSENSITIVE 5-like protein 4 (392 aa).

The interval 1-22 (MGTHIDINNLGGDTSRGNESKP) is disordered. Serine 28, serine 50, and serine 96 each carry phosphoserine. Position 135 is a phosphothreonine (threonine 135). The disordered stretch occupies residues 266–297 (NMGGAGGTVTATSPGTSSAENNTWSSPVPYVF). The segment covering 274-291 (VTATSPGTSSAENNTWSS) has biased composition (polar residues). Residues 311-374 (VERRQKRMIK…NSELKEFSKQ (64 aa)) enclose the bZIP domain. The segment at 313–332 (RRQKRMIKNRESAARSRARK) is basic motif. Residues 339–360 (LEAEIESLKLVNQDLQKKQAEI) are leucine-zipper.

The protein belongs to the bZIP family. ABI5 subfamily. As to quaternary structure, DNA-binding heterodimer. Interacts with ABI3 and the AFP proteins AFP1, AFP2, AFP3 and AFP4. In terms of processing, phosphorylated by CPK4, CPK11, SRK2D and SRK2I in vitro.

The protein resides in the nucleus. Functionally, binds to the ABA-responsive element (ABRE). Could participate in abscisic acid-regulated gene expression. In Arabidopsis thaliana (Mouse-ear cress), this protein is ABSCISIC ACID-INSENSITIVE 5-like protein 4 (ABF1).